The chain runs to 78 residues: Large ribosomal subunit protein bL28 (78 aa).

The interval 1–31 (MAAHCQVTGAEPGFGHSISHSHRRNKRRFDP) is disordered.

The protein belongs to the bacterial ribosomal protein bL28 family.

This Arthrobacter sp. (strain FB24) protein is Large ribosomal subunit protein bL28.